A 568-amino-acid polypeptide reads, in one-letter code: Peroxisomal leader peptide-processing protease (568 aa).

The serine protease stretch occupies residues 332 to 568 (TPRGLPLRDL…PLSEVPRSKL (237 aa)). Active-site charge relay system residues include His374, Asp410, and Ser483.

This sequence belongs to the peptidase S1B family. Homodimer. Forms a heterodimer with the C-terminal cleavage product (49 kDa form). Forms a heterodimer with the N-terminal cleavage product (10 kDa form). Interacts with PEX5. Interacts with LONP2. In terms of processing, self-cleavage gives rise to an N-terminal 10-kDa fragment and C-terminal 49-kDa fragment upon import into the peroxisomes. The full-lengh TYSND1 is the active the proteolytic processing of PTS1- and PTS2-proteins and in self-cleavage, and intermolecular self-cleavage of TYSND1 down-regulates its protease activity.

The protein localises to the peroxisome. With respect to regulation, inhibited by N-ethylmaleimide (NEM). Not affected by leupeptin or trans-epoxysuccinyl-l-leucylamido-(4-gianidino) butane (E64). Functionally, peroxisomal protease that mediates both the removal of the leader peptide from proteins containing a PTS2 target sequence and processes several PTS1-containing proteins. Catalyzes the processing of PTS1-proteins involved in the peroxisomal beta-oxidation of fatty acids. The protein is Peroxisomal leader peptide-processing protease (Tysnd1) of Mus musculus (Mouse).